The following is a 136-amino-acid chain: uncharacterized protein (136 aa).

This is an uncharacterized protein from Mycoplasma pneumoniae (strain ATCC 29342 / M129 / Subtype 1) (Mycoplasmoides pneumoniae).